The following is a 775-amino-acid chain: MTSVHDFATATRPATPSAAAQEPAPALPPGLDRNTLDALTHGRLGDPFAVLGPHRLETAEGERPHRVVRAFHPGARRVQAIDPRGQVMAELAPVGRTGLFHGRLPDDAPDADGHPGAYRLRVVWPAGAGHEAVQEAEDPYAFGLLLGDLDLHLIAEGRHWELARCLGAQAMRQDDVAGVRFAVWAPNARRVSVVGDFNQWDGRRHPMRLRHGTGVWELFVPAGLGAGPGSRYKFELVGADGHLLVKADPVARRTEAPPATASVVADPLPFRWSDAAWMETRAARQRPDAPIAIYEVHAGSWLRDVEDGGRSLDWDALGERLIPYVAGLGFTHVELLPVAEHPFGGSWGYQPLGLFAPSARFGPPEAFARFVERCHQAALGVIVDWVPAHFPSDPHGLARFDGTALYEHADPREGFHQDWNTLIYNFGRHEVRGFLIASALEWLEHFHIDGLRVDAVASMLYRDYSRPADAWVPNRYGGRENLEAVAFLQQMNAVVHARCPGAITIAEESTAWPGVTAAVEFNGLGFDYKWNMGWMHDTLHYMQRDPIYRQHHHDGLTFGLVYAFSERFILPLSHDEVVHGKGSLLGKMPGDDWQRLANLRAYLAFMWTHPGKKLLFMGGEFGQLGEWNHDAAPEWHLLDDPRHRGVQRLVHDLNALYRSEPALHARDCAPEGFSWVIGDDRANSVFAYLRLDTAGTPMLIVANMTPVPRDGYRIGVPDVDGAVRWREMLNTDSAVYGGTNLGNGGVVDVEDVESHGWRRSVVVRLPPLAVVVLKV.

The tract at residues 1 to 39 (MTSVHDFATATRPATPSAAAQEPAPALPPGLDRNTLDAL) is disordered. The segment covering 8–24 (ATATRPATPSAAAQEPA) has biased composition (low complexity). The active-site Nucleophile is D454. Residue E507 is the Proton donor of the active site.

This sequence belongs to the glycosyl hydrolase 13 family. GlgB subfamily. In terms of assembly, monomer.

It catalyses the reaction Transfers a segment of a (1-&gt;4)-alpha-D-glucan chain to a primary hydroxy group in a similar glucan chain.. Its pathway is glycan biosynthesis; glycogen biosynthesis. In terms of biological role, catalyzes the formation of the alpha-1,6-glucosidic linkages in glycogen by scission of a 1,4-alpha-linked oligosaccharide from growing alpha-1,4-glucan chains and the subsequent attachment of the oligosaccharide to the alpha-1,6 position. The polypeptide is 1,4-alpha-glucan branching enzyme GlgB (Ralstonia nicotianae (strain ATCC BAA-1114 / GMI1000) (Ralstonia solanacearum)).